The primary structure comprises 396 residues: Arginine biosynthesis bifunctional protein ArgJ (396 aa).

Substrate-binding residues include threonine 150, lysine 177, threonine 188, glutamate 267, asparagine 391, and threonine 396. The active-site Nucleophile is threonine 188.

This sequence belongs to the ArgJ family. As to quaternary structure, heterotetramer of two alpha and two beta chains.

The protein resides in the cytoplasm. It catalyses the reaction N(2)-acetyl-L-ornithine + L-glutamate = N-acetyl-L-glutamate + L-ornithine. The enzyme catalyses L-glutamate + acetyl-CoA = N-acetyl-L-glutamate + CoA + H(+). Its pathway is amino-acid biosynthesis; L-arginine biosynthesis; L-ornithine and N-acetyl-L-glutamate from L-glutamate and N(2)-acetyl-L-ornithine (cyclic): step 1/1. The protein operates within amino-acid biosynthesis; L-arginine biosynthesis; N(2)-acetyl-L-ornithine from L-glutamate: step 1/4. Catalyzes two activities which are involved in the cyclic version of arginine biosynthesis: the synthesis of N-acetylglutamate from glutamate and acetyl-CoA as the acetyl donor, and of ornithine by transacetylation between N(2)-acetylornithine and glutamate. The protein is Arginine biosynthesis bifunctional protein ArgJ of Wolinella succinogenes (strain ATCC 29543 / DSM 1740 / CCUG 13145 / JCM 31913 / LMG 7466 / NCTC 11488 / FDC 602W) (Vibrio succinogenes).